A 691-amino-acid polypeptide reads, in one-letter code: DNA ligase (691 aa).

NAD(+) contacts are provided by residues 41 to 45 (DAEYD), 90 to 91 (SL), and Glu130. Lys132 serves as the catalytic N6-AMP-lysine intermediate. NAD(+)-binding residues include Arg153, Glu190, Lys307, and Lys331. Zn(2+) is bound by residues Cys425, Cys428, Cys443, and Cys449. In terms of domain architecture, BRCT spans 610-691 (APQGVLAGKT…LHQLLEGNTP (82 aa)).

This sequence belongs to the NAD-dependent DNA ligase family. LigA subfamily. Requires Mg(2+) as cofactor. Mn(2+) serves as cofactor.

It catalyses the reaction NAD(+) + (deoxyribonucleotide)n-3'-hydroxyl + 5'-phospho-(deoxyribonucleotide)m = (deoxyribonucleotide)n+m + AMP + beta-nicotinamide D-nucleotide.. DNA ligase that catalyzes the formation of phosphodiester linkages between 5'-phosphoryl and 3'-hydroxyl groups in double-stranded DNA using NAD as a coenzyme and as the energy source for the reaction. It is essential for DNA replication and repair of damaged DNA. The sequence is that of DNA ligase from Burkholderia ambifaria (strain MC40-6).